A 100-amino-acid chain; its full sequence is Aspartyl/glutamyl-tRNA(Asn/Gln) amidotransferase subunit C (100 aa).

It belongs to the GatC family. Heterotrimer of A, B and C subunits.

It carries out the reaction L-glutamyl-tRNA(Gln) + L-glutamine + ATP + H2O = L-glutaminyl-tRNA(Gln) + L-glutamate + ADP + phosphate + H(+). The catalysed reaction is L-aspartyl-tRNA(Asn) + L-glutamine + ATP + H2O = L-asparaginyl-tRNA(Asn) + L-glutamate + ADP + phosphate + 2 H(+). Functionally, allows the formation of correctly charged Asn-tRNA(Asn) or Gln-tRNA(Gln) through the transamidation of misacylated Asp-tRNA(Asn) or Glu-tRNA(Gln) in organisms which lack either or both of asparaginyl-tRNA or glutaminyl-tRNA synthetases. The reaction takes place in the presence of glutamine and ATP through an activated phospho-Asp-tRNA(Asn) or phospho-Glu-tRNA(Gln). This is Aspartyl/glutamyl-tRNA(Asn/Gln) amidotransferase subunit C from Streptococcus pneumoniae (strain Hungary19A-6).